The primary structure comprises 84 residues: Cell division topological specificity factor (84 aa).

This sequence belongs to the MinE family.

In terms of biological role, prevents the cell division inhibition by proteins MinC and MinD at internal division sites while permitting inhibition at polar sites. This ensures cell division at the proper site by restricting the formation of a division septum at the midpoint of the long axis of the cell. This Cupriavidus taiwanensis (strain DSM 17343 / BCRC 17206 / CCUG 44338 / CIP 107171 / LMG 19424 / R1) (Ralstonia taiwanensis (strain LMG 19424)) protein is Cell division topological specificity factor.